Reading from the N-terminus, the 725-residue chain is N-alpha-acetyltransferase 35, NatC auxiliary subunit (725 aa).

Phosphoserine is present on Ser187. The tract at residues 548 to 573 (ERIMEEQQKGRSSKKTKKKKKVRPLS) is disordered. Basic residues predominate over residues 558 to 571 (RSSKKTKKKKKVRP).

It belongs to the MAK10 family. In terms of assembly, component of the N-terminal acetyltransferase C (NatC) complex, which is composed of NAA35, NAA38 and NAA30.

It is found in the cytoplasm. In terms of biological role, auxillary component of the N-terminal acetyltransferase C (NatC) complex which catalyzes acetylation of N-terminal methionine residues. N-terminal acetylation protects proteins from ubiquitination and degradation by the N-end rule pathway. Involved in regulation of apoptosis and proliferation of smooth muscle cells. The polypeptide is N-alpha-acetyltransferase 35, NatC auxiliary subunit (NAA35) (Homo sapiens (Human)).